A 472-amino-acid chain; its full sequence is H(+)/Cl(-) exchange transporter ClcA (472 aa).

Over 1 to 32 the chain is Cytoplasmic; the sequence is MKAETPSFEAHQFVRVRRGDAVRRLIQRDKTP. Residues 33-69 traverse the membrane as a helical segment; the sequence is LAVLFMAAVVGTLAGLVGVAFEKSVNWVQNQRIGALA. Over 70–76 the chain is Periplasmic; sequence QVADHWY. Residues 77 to 100 form a helical membrane-spanning segment; sequence LVWPLAFILSALLAMVGYFLVRRF. Positions 106–110 match the Selectivity filter part_1 motif; it reads GSGIP. S107 lines the chloride pocket. Positions 109 to 116 form an intramembrane region, helical; it reads IPEIEGAL. Topologically, residues 117 to 123 are cytoplasmic; sequence EELRPVR. Transmembrane regions (helical) follow at residues 124–141 and 148–166; these read WWRV…TLGA and EGPM…LDVF. Residues 146-150 carry the Selectivity filter part_2 motif; sequence GREGP. Residues 167–176 are Cytoplasmic-facing; the sequence is RMRSPEARHT. Intramembrane regions (helical) lie at residues 177–189 and 193–201; these read LLAT…LSAA and PLAGILFII. The Cytoplasmic portion of the chain corresponds to 202–214; the sequence is EEMRPQFRYNLIS. The chain crosses the membrane as a helical span at residues 215-232; sequence IKAVFTGVIMSSIVFRIF. Topologically, residues 233–252 are periplasmic; the sequence is NGEAAIIEVGKLSNAPVNTL. The chain crosses the membrane as a helical span at residues 253–281; that stretch reads WLYLVLGMLFGCFGPLFNFLVLRTQDLFQ. Topologically, residues 282–287 are cytoplasmic; it reads RIHGGN. Residues 288–309 form a helical membrane-spanning segment; the sequence is IKKWVLIGGLIGGLCGLLGLMQ. Over 310 to 329 the chain is Periplasmic; sequence PSAVGGGFNLIPIAAAGNFS. 2 helical membrane-spanning segments follow: residues 330–349 and 355–376; these read VGLL…ICFS and GIFA…MAAI. The short motif at 355 to 359 is the Selectivity filter part_3 element; it reads GIFAP. Residues I356 and F357 each coordinate chloride. The Periplasmic segment spans residues 377–386; sequence PLFPAYHLDA. Positions 387–401 form an intramembrane region, helical; that stretch reads GTFAIAGMGALLAAS. Positions 402 to 404 form an intramembrane region, note=Loop between two helices; that stretch reads VRA. The segment at residues 405 to 416 is an intramembrane region (helical); it reads PLTGIVLVLEMT. The segment at residues 417-421 is an intramembrane region (note=Loop between two helices); that stretch reads DNYQL. A helical membrane pass occupies residues 422–438; sequence ILPMIITCLGATLLAQF. Over 439-472 the chain is Cytoplasmic; the sequence is LGGKPLYSTILQRTLAKQEAEQAAKAQQAPRENT. Chloride is bound at residue Y445.

This sequence belongs to the chloride channel (TC 2.A.49) family. ClcA subfamily. Homodimer.

Its subcellular location is the cell inner membrane. The catalysed reaction is 2 chloride(in) + H(+)(out) = 2 chloride(out) + H(+)(in). Proton-coupled chloride transporter. Functions as antiport system and exchanges two chloride ions for 1 proton. Probably acts as an electrical shunt for an outwardly-directed proton pump that is linked to amino acid decarboxylation, as part of the extreme acid resistance (XAR) response. The polypeptide is H(+)/Cl(-) exchange transporter ClcA (Klebsiella pneumoniae subsp. pneumoniae (strain ATCC 700721 / MGH 78578)).